Here is a 389-residue protein sequence, read N- to C-terminus: E3 ubiquitin-protein ligase E3D (389 aa).

An N-acetylalanine modification is found at alanine 2. The BRAT1-like motif motif lies at 129 to 159 (PLPSENWGALVGEWCCHPDPFANKSLHPQEN). Residue cysteine 144 participates in Zn(2+) binding. The tract at residues 235-257 (QSSERSFPIIPRSWFVQSVIAQC) is interaction with UBE2C. The tract at residues 353-389 (LPSATCLELLLILSKSNANLPSSLRRVNSFQVAFLKM) is HECT-like.

In terms of assembly, interacts with UBE2C/UbcH10 (E2 ubiquitin-conjugating enzyme). In vitro, interacts with cyclin-B. In terms of processing, ubiquitinated by UBCH10 (E2 ubiquitin-conjugating enzyme).

It localises to the cytoplasm. It catalyses the reaction S-ubiquitinyl-[E2 ubiquitin-conjugating enzyme]-L-cysteine + [acceptor protein]-L-lysine = [E2 ubiquitin-conjugating enzyme]-L-cysteine + N(6)-ubiquitinyl-[acceptor protein]-L-lysine.. Its pathway is protein modification; protein ubiquitination. In terms of biological role, E3 ubiquitin-protein ligase which accepts ubiquitin from specific E2 ubiquitin-conjugating enzymes, and transfers it to substrates, generally promoting their degradation by the proteasome. Independently of its E3 ubiquitin-protein ligase activity, acts as an inhibitor of CPSF3 endonuclease activity by blocking CPSF3 active site. The polypeptide is E3 ubiquitin-protein ligase E3D (UBE3D) (Homo sapiens (Human)).